The primary structure comprises 329 residues: MTGNAGEWCLMESDPGVFTELIKGFGCRGAQVEEIWSLEPENFEKLKPVHGLIFLFKWQPGEEPAGSVVQDSRLDTIFFAKQVINNACATQAIVSVLLNCTHQDVHLGETLSEFKEFSQSFDAAMKGLALSNSDVIRQVHNSFARQQMFEFDAKTSAKEEDAFHFVSYVPVNGRLYELDGLREGPIDLGACNQDDWISAVRPVIEKRIQKYSEGEIRFNLMAIVSDRKMIYEQKIAELQRQLAEEEPMDTDQGSNMLSAIQSEVAKNQMLIEEEVQKLKRYKIENIRRKHNYLPFIMELLKTLAEHQQLIPLVEKAKEKQNAKKAQETK.

Residues 7–225 (EWCLMESDPG…IRFNLMAIVS (219 aa)) enclose the UCH catalytic domain. Lysine 47 is modified (N6-succinyllysine). Cysteine 88 (nucleophile) is an active-site residue. Lysine 158 bears the N6-acetyllysine mark. Catalysis depends on histidine 164, which acts as the Proton donor. At lysine 289 the chain carries N6-succinyllysine. Residues 291 to 319 (NYLPFIMELLKTLAEHQQLIPLVEKAKEK) enclose the ULD domain. An interaction with ADRM1 region spans residues 313-329 (VEKAKEKQNAKKAQETK).

The protein belongs to the peptidase C12 family. Component of the 19S (PA700) regulatory complex of the 26S proteasome. Interacts with ADRM1 and NFRKB. Component of the INO80 complex; specifically part of a complex module associated with N-terminus of INO80.

It is found in the cytoplasm. It localises to the nucleus. It catalyses the reaction Thiol-dependent hydrolysis of ester, thioester, amide, peptide and isopeptide bonds formed by the C-terminal Gly of ubiquitin (a 76-residue protein attached to proteins as an intracellular targeting signal).. Its activity is regulated as follows. Activated by ADRM1. Inhibited by interaction with NFRKB. Functionally, protease that specifically cleaves 'Lys-48'-linked polyubiquitin chains. Deubiquitinating enzyme associated with the 19S regulatory subunit of the 26S proteasome. Putative regulatory component of the INO80 complex; however is inactive in the INO80 complex and is activated by a transient interaction of the INO80 complex with the proteasome via ADRM1. The protein is Ubiquitin carboxyl-terminal hydrolase isozyme L5 (UCHL5) of Sus scrofa (Pig).